The primary structure comprises 259 residues: Flap endonuclease Xni (259 aa).

Asp-109 provides a ligand contact to Mg(2+). A 5'-3' exonuclease domain is found at 165–255 (VTPAQLTDYW…FNLQDIRFNS (91 aa)). Residues Leu-176, Pro-185, Val-187, and Ile-190 each contribute to the K(+) site. Residues 189–194 (GIGPKA) are interaction with DNA.

The protein belongs to the Xni family. Mg(2+) serves as cofactor. It depends on K(+) as a cofactor.

Its function is as follows. Has flap endonuclease activity. During DNA replication, flap endonucleases cleave the 5'-overhanging flap structure that is generated by displacement synthesis when DNA polymerase encounters the 5'-end of a downstream Okazaki fragment. This is Flap endonuclease Xni from Vibrio cholerae serotype O1 (strain ATCC 39315 / El Tor Inaba N16961).